Here is a 114-residue protein sequence, read N- to C-terminus: FK506-binding protein 1 (114 aa).

In terms of domain architecture, PPIase FKBP-type spans 26-114; the sequence is GDLVTIHYTG…VFDVELLKIN (89 aa).

This sequence belongs to the FKBP-type PPIase family. FKBP1 subfamily.

Its subcellular location is the cytoplasm. It carries out the reaction [protein]-peptidylproline (omega=180) = [protein]-peptidylproline (omega=0). With respect to regulation, inhibited by both FK506 and rapamycin. Functionally, PPIases accelerate the folding of proteins. It catalyzes the cis-trans isomerization of proline imidic peptide bonds in oligopeptides. The polypeptide is FK506-binding protein 1 (FPR1) (Kluyveromyces lactis (strain ATCC 8585 / CBS 2359 / DSM 70799 / NBRC 1267 / NRRL Y-1140 / WM37) (Yeast)).